A 357-amino-acid polypeptide reads, in one-letter code: Outer membrane protein YedS (357 aa).

An N-terminal signal peptide occupies residues 1-21 (MKRKVLAMLVPALLVAGAANA).

Belongs to the Gram-negative porin family.

It localises to the cell outer membrane. Its function is as follows. Forms pores that allow passive diffusion of small molecules across the outer membrane. Plays a role in resistance to carbapenems; this carbapenem-resistant, noncarbapenemase-producing clinical isolate has a deletion in ompF and a mutated marR gene that does not induce expression of this protein. However if this gene is overexpressed, or if wild-type marR is introduced, this leads to decreased resistance to the carbapenem antibiotics ertapenem, imipenem and meropenem. This Escherichia coli protein is Outer membrane protein YedS.